The primary structure comprises 332 residues: tRNA-dihydrouridine synthase B (332 aa).

FMN is bound by residues P16 to A18 and Q70. C100 serves as the catalytic Proton donor. Residues K139, N200–D202, and G224–R225 contribute to the FMN site.

Belongs to the Dus family. DusB subfamily. The cofactor is FMN.

The enzyme catalyses a 5,6-dihydrouridine in tRNA + NAD(+) = a uridine in tRNA + NADH + H(+). It carries out the reaction a 5,6-dihydrouridine in tRNA + NADP(+) = a uridine in tRNA + NADPH + H(+). Functionally, catalyzes the synthesis of 5,6-dihydrouridine (D), a modified base found in the D-loop of most tRNAs, via the reduction of the C5-C6 double bond in target uridines. This is tRNA-dihydrouridine synthase B from Xanthomonas campestris pv. campestris (strain ATCC 33913 / DSM 3586 / NCPPB 528 / LMG 568 / P 25).